The chain runs to 212 residues: Transcriptional regulator GfcR (212 aa).

The segment at 38 to 60 is disordered; that stretch reads LVERSGTGTEPDTSDDGGPHDIH.

Belongs to the purine/pyrimidine phosphoribosyltransferase family. GfcR subfamily.

Functionally, DNA-binding transcriptional regulator that functions as a regulator of central sugar catabolic pathways. The chain is Transcriptional regulator GfcR from Haloarcula marismortui (strain ATCC 43049 / DSM 3752 / JCM 8966 / VKM B-1809) (Halobacterium marismortui).